Here is a 341-residue protein sequence, read N- to C-terminus: Lipoyl synthase (341 aa).

Residues cysteine 85, cysteine 90, cysteine 96, cysteine 111, cysteine 115, cysteine 118, and serine 325 each contribute to the [4Fe-4S] cluster site. The Radical SAM core domain maps to 97–314 (FSGGTATFMI…AEEGYKMGFK (218 aa)).

It belongs to the radical SAM superfamily. Lipoyl synthase family. [4Fe-4S] cluster serves as cofactor.

It localises to the cytoplasm. The enzyme catalyses [[Fe-S] cluster scaffold protein carrying a second [4Fe-4S](2+) cluster] + N(6)-octanoyl-L-lysyl-[protein] + 2 oxidized [2Fe-2S]-[ferredoxin] + 2 S-adenosyl-L-methionine + 4 H(+) = [[Fe-S] cluster scaffold protein] + N(6)-[(R)-dihydrolipoyl]-L-lysyl-[protein] + 4 Fe(3+) + 2 hydrogen sulfide + 2 5'-deoxyadenosine + 2 L-methionine + 2 reduced [2Fe-2S]-[ferredoxin]. It participates in protein modification; protein lipoylation via endogenous pathway; protein N(6)-(lipoyl)lysine from octanoyl-[acyl-carrier-protein]: step 2/2. Functionally, catalyzes the radical-mediated insertion of two sulfur atoms into the C-6 and C-8 positions of the octanoyl moiety bound to the lipoyl domains of lipoate-dependent enzymes, thereby converting the octanoylated domains into lipoylated derivatives. This chain is Lipoyl synthase, found in Pseudomonas fluorescens (strain SBW25).